The following is a 155-amino-acid chain: MGKRFGYSFQNFDPERMARASGRDLRISPKLAVEVCRELRGMMLNDALRYLDEVIALKRPVPLRRYNDSQGHKPGKGFGPGRYPVKVAKAIKKVLLNAKNNAEQKGLDPDKLKIIHIAAHRGPVLRGWYPRAFGRATPFNEQTTHIEVVVEEIRR.

It belongs to the universal ribosomal protein uL22 family. In terms of assembly, part of the 50S ribosomal subunit.

Functionally, this protein binds specifically to 23S rRNA. It makes multiple contacts with different domains of the 23S rRNA in the assembled 50S subunit and ribosome. Its function is as follows. The globular domain of the protein is located near the polypeptide exit tunnel on the outside of the subunit, while an extended beta-hairpin is found that lines the wall of the exit tunnel in the center of the 70S ribosome. The sequence is that of Large ribosomal subunit protein uL22 from Pyrococcus horikoshii (strain ATCC 700860 / DSM 12428 / JCM 9974 / NBRC 100139 / OT-3).